The primary structure comprises 297 residues: Acetylglutamate kinase (297 aa).

Substrate-binding positions include 72-73, Arg-94, and Asn-193; that span reads GG.

Belongs to the acetylglutamate kinase family. ArgB subfamily.

The protein resides in the cytoplasm. The enzyme catalyses N-acetyl-L-glutamate + ATP = N-acetyl-L-glutamyl 5-phosphate + ADP. It functions in the pathway amino-acid biosynthesis; L-arginine biosynthesis; N(2)-acetyl-L-ornithine from L-glutamate: step 2/4. Catalyzes the ATP-dependent phosphorylation of N-acetyl-L-glutamate. This Mycobacterium leprae (strain TN) protein is Acetylglutamate kinase.